Reading from the N-terminus, the 363-residue chain is Protein EXORDIUM-like 5 (363 aa).

Residues 1-25 (MSSPATTITFFFFFTLSSFFYITSS) form the signal peptide. N-linked (GlcNAc...) asparagine glycosylation is present at N144.

It belongs to the EXORDIUM family.

Its subcellular location is the secreted. The protein localises to the extracellular space. It is found in the apoplast. In terms of biological role, may play a role in a brassinosteroid-dependent regulation of growth and development. The polypeptide is Protein EXORDIUM-like 5 (EXL5) (Arabidopsis thaliana (Mouse-ear cress)).